Here is a 414-residue protein sequence, read N- to C-terminus: Esterase FrsA (414 aa).

It belongs to the FrsA family.

It catalyses the reaction a carboxylic ester + H2O = an alcohol + a carboxylate + H(+). Its function is as follows. Catalyzes the hydrolysis of esters. This Escherichia coli O127:H6 (strain E2348/69 / EPEC) protein is Esterase FrsA.